Here is a 309-residue protein sequence, read N- to C-terminus: Serine/threonine-protein phosphatase 4 catalytic subunit (309 aa).

4 residues coordinate Mn(2+): Asp52, His54, Asp80, and Asn112. His113 (proton donor) is an active-site residue. 2 residues coordinate Mn(2+): His162 and His236. Leu309 is subject to Leucine methyl ester.

The protein belongs to the PPP phosphatase family. PP-4 (PP-X) subfamily. Catalytic subunit of the histone H2A phosphatase complex (HTP-C) containing PPH3, PSY2 and PSY4. Requires Mn(2+) as cofactor.

It localises to the cytoplasm. The protein localises to the nucleus. It carries out the reaction O-phospho-L-seryl-[protein] + H2O = L-seryl-[protein] + phosphate. It catalyses the reaction O-phospho-L-threonyl-[protein] + H2O = L-threonyl-[protein] + phosphate. Functionally, forms the histone H2A phosphatase complex in association with the regulatory subunits PSY2 and PSY4, which dephosphorylates H2AS128ph (gamma-H2A) that has been displaced from sites of DNA lesions in the double-stranded DNA break repair process. Dephosphorylation is necessary for efficient recovery from the DNA damage checkpoint. This chain is Serine/threonine-protein phosphatase 4 catalytic subunit (PPH3), found in Candida glabrata (strain ATCC 2001 / BCRC 20586 / JCM 3761 / NBRC 0622 / NRRL Y-65 / CBS 138) (Yeast).